Here is a 1013-residue protein sequence, read N- to C-terminus: MGLRGGGGRAGGPAPGWTCLLLCAALRSLLASPGSEVNLLDSRTVMGDLGWIAYPKNGWEEIGEVDENYAPIHTYQVCKVMEQNQNNWLLTSWISNEGRPASSFELKFTLRDCNSLPGGLGTCKETFNMYYFESDDEDGRNIRENQYIKIDTIAADESFTELDLGDRVMKLNTEVRDVGPLTKKGFYLAFQDVGACIALVSVRVYYKKCPSVIRNLARFPDTITGADSSQLLEVSGVCVNHSVTDEAPKMHCSAEGEWLVPIGKCLCKAGYEEKNNTCQVCRPGFFKASPHSPSCSKCPPHSYTLDEASTSCLCEEHYFRRESDPPTMACTRPPSAPRSAISNVNETSVFLEWIPPADTGGRKDVSYYIACKKCNSHSGLCEACGSHVRYLPQQTGLKNTSVMMVDLLAHTNYTFEIEAVNGVSDQNPGARQFVSVNVTTNQAAPSPVSSVKKGKITKNSISLSWQEPDRPNGIILEYEIKYFEKDQETSYTIIKSKETAITADGLKPGSAYVFQIRARTAAGYGGFSRRFEFETSPVLAASSDQSQIPIIVVSVTVGVILLAVVIGFLLSGSCCDHGCGWASSLRAVAYPSLIWRCGYSKAKQDPEEEKMHFHNGHIKLPGVRTYIDPHTYEDPNQAVHEFAKEIEASCITIERVIGAGEFGEVCSGRLKLQGKREFPVAIKTLKVGYTEKQRRDFLGEASIMGQFDHPNIIHLEGVVTKSKPVMIVTEYMENGSLDTFLKKNDGQFTVIQLVGMLRGIASGMKYLSDMGYVHRDLAARNILINSNLVCKVSDFGLSRVLEDDPEAAYTTRGGKIPIRWTAPEAIAFRKFTSASDVWSYGIVMWEVMSYGERPYWEMTNQDVIKAVEEGYRLPSPMDCPAALYQLMLDCWQKDRNSRPKFDEIVSMLDKLIRNPSSLKTLVNASSRVSNLLVEHSPVGSGAYRSVGEWLEAIKMGRYTEIFMENGYSSMDSVAQVTLEDLRRLGVTLVGHQKKIMNSLQEMKVQLVNGMVPL.

Positions 1 to 31 are cleaved as a signal peptide; sequence MGLRGGGGRAGGPAPGWTCLLLCAALRSLLA. Residues 32–549 lie on the Extracellular side of the membrane; that stretch reads SPGSEVNLLD…AASSDQSQIP (518 aa). The 179-residue stretch at 36–214 folds into the Eph LBD domain; sequence EVNLLDSRTV…YYKKCPSVIR (179 aa). N-linked (GlcNAc...) asparagine glycosylation is found at Asn-240, Asn-275, Asn-345, Asn-399, Asn-412, and Asn-437. Fibronectin type-III domains are found at residues 333 to 443 and 444 to 538; these read PPSA…TNQA and APSP…TSPV. Residues 550 to 570 form a helical membrane-spanning segment; it reads IIVVSVTVGVILLAVVIGFLL. Over 571-1013 the chain is Cytoplasmic; sequence SGSCCDHGCG…VQLVNGMVPL (443 aa). Phosphotyrosine; by autocatalysis occurs at positions 626 and 632. The Protein kinase domain occupies 651 to 912; the sequence is ITIERVIGAG…EIVSMLDKLI (262 aa). Residues 657–665 and Lys-683 each bind ATP; that span reads IGAGEFGEV. Residue Asp-776 is the Proton acceptor of the active site. Residues Tyr-809 and Tyr-958 each carry the phosphotyrosine; by autocatalysis modification. Residues 941-1013 enclose the SAM domain; the sequence is GAYRSVGEWL…VQLVNGMVPL (73 aa). The PDZ-binding motif lies at 1011–1013; it reads VPL.

It belongs to the protein kinase superfamily. Tyr protein kinase family. Ephrin receptor subfamily. As to quaternary structure, heterotetramer upon binding of the ligand. The heterotetramer is composed of an ephrin dimer and a receptor dimer. Oligomerization is probably required to induce biological responses. Phosphorylated. Phosphorylation is stimulated by the ligand EFNA5. In terms of tissue distribution, detected in the 10-day embryonic brain, weaker expression in the rest of the 10-day embryo. Undetected in adult tissues.

Its subcellular location is the cell membrane. It is found in the cell projection. It localises to the axon. The protein resides in the dendrite. It carries out the reaction L-tyrosyl-[protein] + ATP = O-phospho-L-tyrosyl-[protein] + ADP + H(+). Its function is as follows. Receptor tyrosine kinase which binds promiscuously GPI-anchored ephrin-A family ligands residing on adjacent cells, leading to contact-dependent bidirectional signaling into neighboring cells. The signaling pathway downstream of the receptor is referred to as forward signaling while the signaling pathway downstream of the ephrin ligand is referred to as reverse signaling. Among GPI-anchored ephrin-A ligands, EFNA5 most probably constitutes the cognate/functional ligand for EPHA5. Functions as an axon guidance molecule during development and may be involved in the development of the retinotectal, entorhino-hippocampal and hippocamposeptal pathways. Together with EFNA5 plays also a role in synaptic plasticity in adult brain through regulation of synaptogenesis. The chain is Ephrin type-A receptor 5 (EPHA5) from Gallus gallus (Chicken).